The primary structure comprises 224 residues: Tumor protein D52 (224 aa).

Phosphoserine occurs at positions 36 and 40. Residues A62–N114 adopt a coiled-coil conformation. A Phosphoserine modification is found at S176. The disordered stretch occupies residues K187 to L224. Residues N203–T213 show a composition bias toward low complexity. The residue at position 223 (S223) is a Phosphoserine.

Belongs to the TPD52 family. In terms of assembly, forms a homodimer or heterodimer with other members of the family. All isoforms interact with several 14-3-3 proteins. As to expression, isoform 2 is expressed in colon, breast, prostate, pancreas and kidney tumor cell lines. Isoform 2 is expressed at high levels in kidney, prostate, brain, small intestine and pancreas, at moderate levels in placenta and colon, at low levels in lung, liver and heart, and at very low levels in spleen, thymus, peripheral mononuclear blood cells, testis and ovary.

This is Tumor protein D52 (TPD52) from Homo sapiens (Human).